A 335-amino-acid chain; its full sequence is Dihydroorotate dehydrogenase (quinone) (335 aa).

Residues 59–63 (AGLDK) and Thr83 each bind FMN. Lys63 is a substrate binding site. A substrate-binding site is contributed by 108–112 (NRMGF). The FMN site is built by Asn136 and Asn169. Position 169 (Asn169) interacts with substrate. The active-site Nucleophile is Ser172. Substrate is bound at residue Asn174. FMN is bound by residues Lys214 and Thr242. 243–244 (NT) lines the substrate pocket. FMN-binding positions include Gly265, Gly294, and 315-316 (YS).

The protein belongs to the dihydroorotate dehydrogenase family. Type 2 subfamily. As to quaternary structure, monomer. The cofactor is FMN.

The protein localises to the cell membrane. The catalysed reaction is (S)-dihydroorotate + a quinone = orotate + a quinol. It functions in the pathway pyrimidine metabolism; UMP biosynthesis via de novo pathway; orotate from (S)-dihydroorotate (quinone route): step 1/1. Catalyzes the conversion of dihydroorotate to orotate with quinone as electron acceptor. The protein is Dihydroorotate dehydrogenase (quinone) of Neisseria meningitidis serogroup B (strain ATCC BAA-335 / MC58).